The sequence spans 351 residues: Auxin efflux carrier component 5 (351 aa).

10 consecutive transmembrane segments (helical) span residues 7–27, 39–59, 71–91, 100–120, 132–152, 210–230, 234–254, 271–291, 295–315, and 329–349; these read VYKV…GYGS, CDAI…IEFT, FIAA…LWAK, WSIT…GVPL, LVVQ…LFVL, ILGI…PGIL, ILIM…IFMA, MVLK…VLGL, VLRV…FIFA, and VIFG…ALEF.

Belongs to the auxin efflux carrier (TC 2.A.69.1) family. As to expression, expressed in elongating parts of hypocotyl, cotyledon vasculature and guard cells. Detected in root pericycle and root tip and at later developmental stages in leaves, stems and flowers. Expressed in veins of mature leaves.

The protein localises to the endoplasmic reticulum membrane. It localises to the cell membrane. In terms of biological role, auxin transporter regulating intracellular auxin homeostasis and metabolism. Mediates the auxin transport from the cytosol into the lumen of the endoplasmic reticulum. May also act as an auxin efflux carrier when located to the cell membrane. PIN5 and PIN8 may have an antagonistic/compensatory activity. Involved in unfolded protein response (UPR) activation. Involved in the control of vein patterning. Promotes vein formation. PIN5, PIN6, and PIN8 control vein network geometry, but they are expressed in mutually exclusive domains of leaf vascular cells. This is Auxin efflux carrier component 5 from Arabidopsis thaliana (Mouse-ear cress).